Here is a 388-residue protein sequence, read N- to C-terminus: MKRNFPKLIALSLIFSLSVTPIANAESNSNIKAKDKKHVQVNVEDKSVPTDVRNLAQKDYLSYVTSLDKIYNKEKASYTLGEPFKIYKFNKKSDGNYYFPVLNTEGNIDYIVTISPKITKYSSSSSKYTINVSPFLSKVLNQYKDQQITILTNSKGYYVVTQNHKAKLVLKTPRLEDKKLKKTESIPTGNNVTQLKQKASVTMPTSQFKSNNYTYNEQYINKLENFKIRETQGNNGWCAGYTMSALLNATYNTNKYHAEAVMRFLHPNLQGQRFQFTGLTPREMIYFGQTQGRSPQLLNRMTTYNEVDNLTKNNKGIAVLGSRVESRNGMHAGHAMAVVGNAKLDNGQEVIIIWNPWDNGFMTQDAKNNVIPVSNGDHYRWYSSIYGY.

The N-terminal stretch at 1–25 (MKRNFPKLIALSLIFSLSVTPIANA) is a signal peptide. A propeptide spanning residues 26-214 (ESNSNIKAKD…TSQFKSNNYT (189 aa)) is cleaved from the precursor. Catalysis depends on residues Cys-238, His-334, and Asn-355.

It belongs to the peptidase C47 family. In terms of assembly, in the cytoplasm, prematurely activated/folded ScpA forms a stable non-covalent complex with ScpB. Cleavage leads to the activation of ScpA probably by an auto-catalytic manner.

The protein resides in the secreted. It catalyses the reaction Broad endopeptidase action on proteins including elastin, but rather limited hydrolysis of small-molecule substrates. Assays are conveniently made with hemoglobin, casein or Z-Phe-Arg-NHMec as substrate.. Its activity is regulated as follows. Prematurely activated/folded staphopain A is inhibited by staphostatin A (ScpB), which is probably required to protect staphylococcal cytoplasmic proteins from degradation by ScpA. Cysteine protease that plays an important role in the inhibition of host innate immune response. Cleaves host elastins found in connective tissues, pulmonary surfactant protein A in the lungs, and the chemokine receptor CXCR2 on leukocytes. Proteolytic cleavage of surfactant protein A impairs bacterial phagocytosis by neutrophils while CXCR2 degradation blocks neutrophil activation and chemotaxis. Additionally, promotes vascular leakage by activating the plasma kallikerin/kinin system, resulting in hypotension. The protein is Staphopain A (sspP) of Staphylococcus aureus (strain Mu50 / ATCC 700699).